A 664-amino-acid polypeptide reads, in one-letter code: Kinesin-like protein KIF2B (664 aa).

At Thr125 the chain carries Phosphothreonine; by PLK1. The stretch at 149 to 177 (CLREIEKLQKQREKRRRLQLEIRARRALD) forms a coiled coil. At Ser204 the chain carries Phosphoserine; by PLK1. Positions 213-543 (RICVCVRKRP…LRYANRVKEL (331 aa)) constitute a Kinesin motor domain. Position 303–310 (303–310 (GQTGSGKT)) interacts with ATP. The interval 583–607 (VQKEEEKESDELTSTKEPAASWSRS) is disordered. Positions 642-663 (VLTEIQKKLQLLRDDLQKKSQA) form a coiled coil.

The protein belongs to the TRAFAC class myosin-kinesin ATPase superfamily. Kinesin family. MCAK/KIF2 subfamily. Post-translationally, phosphorylation at Thr-125 by PLK1 is required for activity in the correction of kinetochore-microtubules attachment errors, while phosphorylation at Ser-204 also by PLK1 is required for the kinetochore localization and activity in prometaphase.

It is found in the cytoplasm. Its subcellular location is the cytoskeleton. The protein localises to the microtubule organizing center. It localises to the centrosome. The protein resides in the spindle. It is found in the chromosome. Its subcellular location is the centromere. The protein localises to the kinetochore. Its function is as follows. Plus end-directed microtubule-dependent motor required for spindle assembly and chromosome movement. Has microtubule depolymerization activity. Plays a role in chromosome congression. This Rattus norvegicus (Rat) protein is Kinesin-like protein KIF2B.